Consider the following 125-residue polypeptide: MEQKRTLRVFLAVSLLCALANAYPQYQAVIPNGSSVPNPCNTSQIAQGVGHINFQGTGPLNPFGEDFKAAGKQWTTDLCDMDSDGDGRSNGVELGDPECVWSQGETPARTTDLSHPGFDEATVSC.

The signal sequence occupies residues 1–22 (MEQKRTLRVFLAVSLLCALANA). Intrachain disulfides connect Cys40–Cys125 and Cys79–Cys99. Positions 78-125 (LCDMDSDGDGRSNGVELGDPECVWSQGETPARTTDLSHPGFDEATVSC) are disordered. The span at 103–113 (QGETPARTTDL) shows a compositional bias: polar residues.

Binds to attractin and enticin. As to expression, produced by the albumen gland of the egg cordons.

It is found in the secreted. Its function is as follows. A component of the complex of water-borne protein pheromones that stimulates attraction and mating behavior. Modulates pheromone signaling by direct binding to attractin. The protein is Temptin of Aplysia californica (California sea hare).